We begin with the raw amino-acid sequence, 125 residues long: uncharacterized protein (125 aa).

4 consecutive transmembrane segments (helical) span residues 9–29 (IANAGALAVAVWLLDKITLTG), 33–53 (GEKTLTLIVVALVFGLVNMVV), 56–76 (IVQVLTFPLFILTLGLFTLVV), and 100–120 (FWTAVLGGLIVSIVSWALNAF).

It localises to the cell membrane. This is an uncharacterized protein from Streptomyces coelicolor (strain ATCC BAA-471 / A3(2) / M145).